The chain runs to 992 residues: MGMRSAARMPKLTRRSRILIMIALGVIVLLLAGPRLIDAYVDWLWFGELGYRSVFTTMLATRIVVCLVAGVVVGGIVFGGLALAYRTRPVFVPDADNDPVARYRAVVLARLRLVGIGIPAAIGLLAGIVAQSYWARIQLFLHGGDFGVRDPQFGRDLGFYAFELPFYRLMLSYMLVSVFLAFVANLVAHYIFGGIRLSGRTGALSRSARVQLVSLVGVLVLLKAVAYWLDRYELLSHTRGGKPFTGAGYTDINAVLPAKLILMAIALICAAAVFSAIALRDLRIPAIGLVLLLLSSLIVGAGWPLIVEQISVKPNAAQKESEYISRSITATRQAYGLTSDVVTYRNYSGDSPATAEQVAADRATTSNIRLLDPTIVSPAFTQFQQGKNFYYFPDQLSIDRYLDRNGNLRDYVVAARELNPDRLIDNQRDWINRHTVYTHGNGFIASPANTVRGIANDPNQNGGYPEFLVNVVGANGTVVSDGPAPLDQPRIYFGPVISNTSADYAIVGRNGDDREYDYETNIDTKRYTYTGSGGVPLGGWLARSVFAAKFAERNFLFSNVIGSNSKILFNRDPAQRVEAVAPWLTTDSAVYPAIVNKRLVWIVDGYTTLDNYPYSELTSLSSATADSNEVAFNRLVPDKKVSYIRNSVKATVDAYDGTVTLYQQDEKDPVLKAWMQVFPGTVKPKSDIAPELAEHLRYPEDLFKVQRMLLAKYHVNDPVTFFSTSDFWDVPLDPNPTASSYQPPYYIVAKNIAKDDNSASYQLISAMNRFKRDYLAAYISASSDPATYGNLTVLTIPGQVNGPKLANNAITTDPAVSQDLGVIGRDNQNRIRWGNLLTLPVAQGGLLYVEPVYASPGASDAASSYPRLIRVAMMYNDKVGYGPTVRDALTGLFGPGAGATATGIAPTEAAVPPSPAANPPPPASGPQPPPVTAAPPVPVGAVTLSPAKVAALQEIQAAIGAARDAQKKGDFAAYGSALQRLDEAITKFNDAG.

7 helical membrane-spanning segments follow: residues 18 to 38 (ILIMIALGVIVLLLAGPRLID), 63 to 83 (IVVCLVAGVVVGGIVFGGLAL), 113 to 133 (LVGIGIPAAIGLLAGIVAQSY), 175 to 195 (LVSVFLAFVANLVAHYIFGGI), 210 to 230 (VQLVSLVGVLVLLKAVAYWLD), 259 to 279 (KLILMAIALICAAAVFSAIAL), and 287 to 307 (IGLVLLLLSSLIVGAGWPLIV). Residues 906–938 (PTEAAVPPSPAANPPPPASGPQPPPVTAAPPVP) form a disordered region. The span at 912 to 938 (PPSPAANPPPPASGPQPPPVTAAPPVP) shows a compositional bias: pro residues.

The protein belongs to the UPF0182 family.

The protein resides in the cell membrane. This is UPF0182 protein BCG_3215c from Mycobacterium bovis (strain BCG / Pasteur 1173P2).